Reading from the N-terminus, the 153-residue chain is Xanthine-guanine phosphoribosyltransferase (153 aa).

5-phospho-alpha-D-ribose 1-diphosphate contacts are provided by residues 37-38, arginine 69, and 88-96; these read RG and DDLVDTGGT. GMP is bound at residue arginine 69. Aspartate 89 lines the Mg(2+) pocket. Residues aspartate 92 and isoleucine 135 each contribute to the guanine site. Xanthine contacts are provided by aspartate 92 and isoleucine 135. GMP-binding positions include 92 to 96 and 134 to 135; these read DTGGT and WI.

It belongs to the purine/pyrimidine phosphoribosyltransferase family. XGPT subfamily. In terms of assembly, homotetramer. Mg(2+) is required as a cofactor.

Its subcellular location is the cell membrane. It catalyses the reaction GMP + diphosphate = guanine + 5-phospho-alpha-D-ribose 1-diphosphate. The enzyme catalyses XMP + diphosphate = xanthine + 5-phospho-alpha-D-ribose 1-diphosphate. The catalysed reaction is IMP + diphosphate = hypoxanthine + 5-phospho-alpha-D-ribose 1-diphosphate. It functions in the pathway purine metabolism; GMP biosynthesis via salvage pathway; GMP from guanine: step 1/1. Its pathway is purine metabolism; XMP biosynthesis via salvage pathway; XMP from xanthine: step 1/1. Purine salvage pathway enzyme that catalyzes the transfer of the ribosyl-5-phosphate group from 5-phospho-alpha-D-ribose 1-diphosphate (PRPP) to the N9 position of the 6-oxopurines guanine and xanthine to form the corresponding ribonucleotides GMP (guanosine 5'-monophosphate) and XMP (xanthosine 5'-monophosphate), with the release of PPi. To a lesser extent, also acts on hypoxanthine. This Buchnera aphidicola subsp. Baizongia pistaciae (strain Bp) protein is Xanthine-guanine phosphoribosyltransferase.